Reading from the N-terminus, the 386-residue chain is Bifunctional enzyme IspD/IspF (386 aa).

Residues 1–226 (MATPSPLPSF…EDFMADLLPV (226 aa)) are 2-C-methyl-D-erythritol 4-phosphate cytidylyltransferase. The interval 227–386 (RVGTGFDVHK…ATVVRKDTPA (160 aa)) is 2-C-methyl-D-erythritol 2,4-cyclodiphosphate synthase. A divalent metal cation-binding residues include Asp233 and His235. Residues 233-235 (DVH) and 259-260 (HS) contribute to the 4-CDP-2-C-methyl-D-erythritol 2-phosphate site. His267 serves as a coordination point for a divalent metal cation. 4-CDP-2-C-methyl-D-erythritol 2-phosphate contacts are provided by residues 281–283 (DIG), 357–360 (TTTE), Phe364, and Arg367.

In the N-terminal section; belongs to the IspD/TarI cytidylyltransferase family. IspD subfamily. It in the C-terminal section; belongs to the IspF family. It depends on a divalent metal cation as a cofactor.

The catalysed reaction is 2-C-methyl-D-erythritol 4-phosphate + CTP + H(+) = 4-CDP-2-C-methyl-D-erythritol + diphosphate. The enzyme catalyses 4-CDP-2-C-methyl-D-erythritol 2-phosphate = 2-C-methyl-D-erythritol 2,4-cyclic diphosphate + CMP. It participates in isoprenoid biosynthesis; isopentenyl diphosphate biosynthesis via DXP pathway; isopentenyl diphosphate from 1-deoxy-D-xylulose 5-phosphate: step 2/6. The protein operates within isoprenoid biosynthesis; isopentenyl diphosphate biosynthesis via DXP pathway; isopentenyl diphosphate from 1-deoxy-D-xylulose 5-phosphate: step 4/6. Its function is as follows. Bifunctional enzyme that catalyzes the formation of 4-diphosphocytidyl-2-C-methyl-D-erythritol from CTP and 2-C-methyl-D-erythritol 4-phosphate (MEP) (IspD), and catalyzes the conversion of 4-diphosphocytidyl-2-C-methyl-D-erythritol 2-phosphate (CDP-ME2P) to 2-C-methyl-D-erythritol 2,4-cyclodiphosphate (ME-CPP) with a corresponding release of cytidine 5-monophosphate (CMP) (IspF). The chain is Bifunctional enzyme IspD/IspF from Erythrobacter litoralis (strain HTCC2594).